The sequence spans 360 residues: DNA replication and repair protein RecF (360 aa).

Glycine 33–threonine 40 contacts ATP.

Belongs to the RecF family.

It is found in the cytoplasm. In terms of biological role, the RecF protein is involved in DNA metabolism; it is required for DNA replication and normal SOS inducibility. RecF binds preferentially to single-stranded, linear DNA. It also seems to bind ATP. The sequence is that of DNA replication and repair protein RecF from Rickettsia massiliae (strain Mtu5).